Reading from the N-terminus, the 162-residue chain is Caveolin-2 (162 aa).

At 1–86 (MGLETEKADV…FEISKYVMYK (86 aa)) the chain is on the cytoplasmic side. Y19 is modified (phosphotyrosine; by SRC). Phosphoserine is present on residues S20 and S23. Residue Y27 is modified to Phosphotyrosine; by SRC. S36 bears the Phosphoserine mark. Residues 87–107 (FLTVFLAIPLAFIAGILFATL) constitute an intramembrane region (helical). Residues 108 to 162 (SCLHIWILMPFVKTCLMVLPSVQTIWKSVTDVIIAPLCTSVGRCFSSVSLQLSQD) are Cytoplasmic-facing.

This sequence belongs to the caveolin family. As to quaternary structure, monomer or homodimer. Interacts with CAV1; the interaction forms a stable heterooligomeric complex that is required for targeting to lipid rafts and for caveolae formation. Tyrosine phosphorylated forms do not form heterooligomers with the Tyr-19-phosphorylated form existing as a monomer or dimer, and the Tyr-27-form as a monomer only. Interacts (tyrosine phosphorylated form) with the SH2 domain-containing proteins, RASA1, NCK1 and SRC. Interacts (tyrosine phosphorylated form) with INSR, the interaction (Tyr-27-phosphorylated form) is increased on insulin stimulation. Interacts (Tyr-19 phosphorylated form) with MAPK1 (phosphorylated form); the interaction, promoted by insulin, leads to nuclear location and MAPK1 activation. Interacts with STAT3; the interaction is increased on insulin-induced tyrosine phosphorylation leading to STAT activation. Post-translationally, phosphorylated on serine and tyrosine residues. CAV1 promotes phosphorylation on Ser-23 which then targets the complex to the plasma membrane, lipid rafts and caveolae. Phosphorylation on Ser-36 appears to modulate mitosis in endothelial cells. Phosphorylation on both Tyr-19 and Tyr-27 is required for insulin-induced 'Ser-727' phosphorylation of STAT3 and its activation. Phosphorylation on Tyr-19 is required for insulin-induced phosphorylation of MAPK1 and DNA binding of STAT3. Tyrosine phosphorylation is induced by both EGF and insulin (By. similarity).

Its subcellular location is the nucleus. The protein resides in the cytoplasm. The protein localises to the golgi apparatus membrane. It is found in the cell membrane. It localises to the membrane. Its subcellular location is the caveola. In terms of biological role, may act as a scaffolding protein within caveolar membranes. Interacts directly with G-protein alpha subunits and can functionally regulate their activity. Acts as an accessory protein in conjunction with CAV1 in targeting to lipid rafts and driving caveolae formation. The Ser-36 phosphorylated form has a role in modulating mitosis in endothelial cells. Positive regulator of cellular mitogenesis of the MAPK signaling pathway. Required for the insulin-stimulated nuclear translocation and activation of MAPK1 and STAT3, and the subsequent regulation of cell cycle progression. The polypeptide is Caveolin-2 (CAV2) (Gorilla gorilla gorilla (Western lowland gorilla)).